Reading from the N-terminus, the 552-residue chain is FERRY endosomal RAB5 effector complex subunit 3 (552 aa).

S79 is modified (phosphoserine).

As to quaternary structure, component of the FERRY complex composed of five subunits, TBCK, PPP1R21, FERRY3, CRYZL1 and GATD1 with a ratio of 1:2:1:2:4, respectively.

Its subcellular location is the cytoplasm. The protein localises to the early endosome. In terms of biological role, component of the FERRY complex (Five-subunit Endosomal Rab5 and RNA/ribosome intermediary). The FERRY complex directly interacts with mRNAs and RAB5A, and functions as a RAB5A effector involved in the localization and the distribution of specific mRNAs most likely by mediating their endosomal transport. The complex recruits mRNAs and ribosomes to early endosomes through direct mRNA-interaction. Plays a role in mast cell degranulation. The sequence is that of FERRY endosomal RAB5 effector complex subunit 3 from Rattus norvegicus (Rat).